The sequence spans 130 residues: Protein ApaG (130 aa).

The 125-residue stretch at 3–127 (SAVTQDIQIT…FSLDSPFVRR (125 aa)) folds into the ApaG domain.

In Methylocella silvestris (strain DSM 15510 / CIP 108128 / LMG 27833 / NCIMB 13906 / BL2), this protein is Protein ApaG.